We begin with the raw amino-acid sequence, 189 residues long: UPF0301 protein CF0373 (189 aa).

The protein belongs to the UPF0301 (AlgH) family.

The chain is UPF0301 protein CF0373 from Chlamydia felis (strain Fe/C-56) (Chlamydophila felis).